The sequence spans 199 residues: Ribonuclease HI (199 aa).

Positions M1–G68 are not required for RNase H activity. The 132-residue stretch at R66–D197 folds into the RNase H type-1 domain. The as active as intact RNase H stretch occupies residues R69–A199. Residues D75, E115, D139, and D189 each contribute to the Mg(2+) site. Mn(2+) is bound by residues D75, E115, D139, and D189.

It belongs to the RNase H family. It depends on Mn(2+) as a cofactor. Requires Mg(2+) as cofactor. The cofactor is Co(2+). Ni(2+) is required as a cofactor.

It localises to the cytoplasm. It carries out the reaction Endonucleolytic cleavage to 5'-phosphomonoester.. Nuclease that specifically degrades the RNA of RNA-DNA hybrids; seems to act exonucleolytically on RNA/DNA hybrids. Endonucleolytically removes RNA primers from the Okazaki fragments of lagging strand synthesis on its own. Complements the temperature-sensitive phenotype of an E.coli double rnhA/rnhB (RNase H) disruption mutant. The polypeptide is Ribonuclease HI (rnhA) (Halobacterium salinarum (strain ATCC 700922 / JCM 11081 / NRC-1) (Halobacterium halobium)).